Consider the following 173-residue polypeptide: UPF0102 protein Psyc_1908 (173 aa).

Belongs to the UPF0102 family.

In Psychrobacter arcticus (strain DSM 17307 / VKM B-2377 / 273-4), this protein is UPF0102 protein Psyc_1908.